The primary structure comprises 383 residues: Processive diacylglycerol beta-glucosyltransferase (383 aa).

This sequence belongs to the glycosyltransferase 28 family. UgtP subfamily.

The protein localises to the cell membrane. The catalysed reaction is a 1,2-diacyl-3-O-(beta-D-glucopyranosyl)-sn-glycerol + UDP-alpha-D-glucose = a 1,2-diacyl-3-O-(beta-D-Glc-(1-&gt;6)-beta-D-Glc)-sn-glycerol + UDP + H(+). It carries out the reaction a 1,2-diacyl-3-O-(beta-D-Glc-(1-&gt;6)-beta-D-Glc)-sn-glycerol + UDP-alpha-D-glucose = a 1,2-diacyl-3-O-(beta-D-Glc-(1-&gt;6)-beta-D-Glc-(1-&gt;6)-beta-D-Glc)-sn-glycerol + UDP + H(+). The enzyme catalyses a 1,2-diacyl-sn-glycerol + UDP-alpha-D-glucose = a 1,2-diacyl-3-O-(beta-D-glucopyranosyl)-sn-glycerol + UDP + H(+). It participates in glycolipid metabolism; diglucosyl-diacylglycerol biosynthesis. Its function is as follows. Processive glucosyltransferase involved in the biosynthesis of both the bilayer- and non-bilayer-forming membrane glucolipids. Is able to successively transfer up to three glucosyl residues to diacylglycerol (DAG), thereby catalyzing the formation of beta-monoglucosyl-DAG (3-O-(beta-D-glucopyranosyl)-1,2-diacyl-sn-glycerol), beta-diglucosyl-DAG (3-O-(beta-D-glucopyranosyl-beta-(1-&gt;6)-D-glucopyranosyl)-1,2-diacyl-sn-glycerol) and beta-triglucosyl-DAG (3-O-(beta-D-glucopyranosyl-beta-(1-&gt;6)-D-glucopyranosyl-beta-(1-&gt;6)-D-glucopyranosyl)-1,2-diacyl-sn-glycerol). Beta-diglucosyl-DAG is the predominant glycolipid found in Bacillales and is also used as a membrane anchor for lipoteichoic acid (LTA). The sequence is that of Processive diacylglycerol beta-glucosyltransferase from Bacillus licheniformis (strain ATCC 14580 / DSM 13 / JCM 2505 / CCUG 7422 / NBRC 12200 / NCIMB 9375 / NCTC 10341 / NRRL NRS-1264 / Gibson 46).